An 874-amino-acid chain; its full sequence is Alanine--tRNA ligase (874 aa).

Zn(2+)-binding residues include histidine 564, histidine 568, cysteine 665, and histidine 669.

The protein belongs to the class-II aminoacyl-tRNA synthetase family. Zn(2+) is required as a cofactor.

Its subcellular location is the cytoplasm. The catalysed reaction is tRNA(Ala) + L-alanine + ATP = L-alanyl-tRNA(Ala) + AMP + diphosphate. In terms of biological role, catalyzes the attachment of alanine to tRNA(Ala) in a two-step reaction: alanine is first activated by ATP to form Ala-AMP and then transferred to the acceptor end of tRNA(Ala). Also edits incorrectly charged Ser-tRNA(Ala) and Gly-tRNA(Ala) via its editing domain. This is Alanine--tRNA ligase from Paraburkholderia xenovorans (strain LB400).